The chain runs to 163 residues: MRIAIYPGTFDPVTNGHLDILKRATEFFDEVIVAVAVDSNKTTLFSLEERIQLLETAAEELSQVKIRGFEGLTVEFARQCGANAIIRGLRAMQDFEYEFQLALMNKKLAADIETIFLMTQSEFSFISSSSIKWAASLKGNISEFVPPHVERAIYRKYHPEIDD.

Residue threonine 9 participates in substrate binding. Residues threonine 9–phenylalanine 10 and histidine 17 contribute to the ATP site. Substrate contacts are provided by lysine 41, threonine 73, and arginine 87. ATP-binding positions include glycine 88–arginine 90, glutamate 98, and phenylalanine 123–serine 129.

It belongs to the bacterial CoaD family. Homohexamer. Requires Mg(2+) as cofactor.

The protein localises to the cytoplasm. It catalyses the reaction (R)-4'-phosphopantetheine + ATP + H(+) = 3'-dephospho-CoA + diphosphate. It functions in the pathway cofactor biosynthesis; coenzyme A biosynthesis; CoA from (R)-pantothenate: step 4/5. Reversibly transfers an adenylyl group from ATP to 4'-phosphopantetheine, yielding dephospho-CoA (dPCoA) and pyrophosphate. This is Phosphopantetheine adenylyltransferase from Desulfitobacterium hafniense (strain DSM 10664 / DCB-2).